Consider the following 654-residue polypeptide: Acetyl-coenzyme A synthetase (654 aa).

CoA contacts are provided by residues 193-196 and Thr-313; that span reads RRGK. Residues 389–391, 413–418, Asp-506, and Arg-521 contribute to the ATP site; these read GEP and DTWWQT. A CoA-binding site is contributed by Ser-529. An ATP-binding site is contributed by Arg-532. The Mg(2+) site is built by His-545 and Val-548. Position 619 is an N6-acetyllysine (Lys-619).

The protein belongs to the ATP-dependent AMP-binding enzyme family. Requires Mg(2+) as cofactor. Post-translationally, acetylated. Deacetylation by the SIR2-homolog deacetylase activates the enzyme.

The enzyme catalyses acetate + ATP + CoA = acetyl-CoA + AMP + diphosphate. Catalyzes the conversion of acetate into acetyl-CoA (AcCoA), an essential intermediate at the junction of anabolic and catabolic pathways. AcsA undergoes a two-step reaction. In the first half reaction, AcsA combines acetate with ATP to form acetyl-adenylate (AcAMP) intermediate. In the second half reaction, it can then transfer the acetyl group from AcAMP to the sulfhydryl group of CoA, forming the product AcCoA. The polypeptide is Acetyl-coenzyme A synthetase (Wolinella succinogenes (strain ATCC 29543 / DSM 1740 / CCUG 13145 / JCM 31913 / LMG 7466 / NCTC 11488 / FDC 602W) (Vibrio succinogenes)).